A 388-amino-acid chain; its full sequence is Protein kes1 (388 aa).

Belongs to the OSBP family.

Lipid transporter involved in lipid countertransport between the Golgi complex and membranes of the endoplasmic reticulum: specifically exchanges sterol with phosphatidylinositol 4-phosphate (PI4P), delivering sterol to the Golgi in exchange for PI4P, which is degraded by the SAC1 phosphatase in the endoplasmic reticulum. In Schizosaccharomyces pombe (strain 972 / ATCC 24843) (Fission yeast), this protein is Protein kes1 (kes1).